Here is a 164-residue protein sequence, read N- to C-terminus: FMN reductase (NADH) RutF (164 aa).

This sequence belongs to the non-flavoprotein flavin reductase family. RutF subfamily.

It carries out the reaction FMNH2 + NAD(+) = FMN + NADH + 2 H(+). Its function is as follows. Catalyzes the reduction of FMN to FMNH2 which is used to reduce pyrimidine by RutA via the Rut pathway. This Klebsiella pneumoniae (strain 342) protein is FMN reductase (NADH) RutF.